The sequence spans 125 residues: Upsalin (125 aa).

Residues 1–16 (MFPTHVLLIVIACVTA) form the signal peptide.

In terms of processing, weakly glycosylated. Expressed at highest levels in mantle, followed by adductor muscle. Found in the nacreous shell layer (at protein level).

The protein localises to the secreted. In Unio pictorum (Painter's mussel), this protein is Upsalin.